Here is a 490-residue protein sequence, read N- to C-terminus: Katanin p60 ATPase-containing subunit A-like 1 (490 aa).

M1 carries the N-acetylmethionine modification. Positions 95 to 184 (DPAVWPPPVP…DGEMPKFDGA (90 aa)) are disordered. Positions 116-127 (PNREVRPLRKEM) are enriched in basic and acidic residues. Over residues 128–139 (AGVGARGPVGRA) the composition is skewed to low complexity. Residues 143–169 (SKSEKPSTSRDKDCRARGRDDKGRKNM) are compositionally biased toward basic and acidic residues. S174 carries the phosphoserine modification. An ATP-binding site is contributed by 248-255 (GPPGTGKT).

It belongs to the AAA ATPase family. Katanin p60 subunit A1 subfamily. A-like 1 sub-subfamily. In terms of assembly, interacts with KATNB1 and KATNBL1.

It is found in the cytoplasm. Its subcellular location is the cytoskeleton. It localises to the spindle pole. The protein localises to the spindle. The enzyme catalyses n ATP + n H2O + a microtubule = n ADP + n phosphate + (n+1) alpha/beta tubulin heterodimers.. Its function is as follows. Regulates microtubule dynamics in Sertoli cells, a process that is essential for spermiogenesis and male fertility. Severs microtubules in an ATP-dependent manner, promoting rapid reorganization of cellular microtubule arrays. Has microtubule-severing activity in vitro. The sequence is that of Katanin p60 ATPase-containing subunit A-like 1 from Papio anubis (Olive baboon).